The chain runs to 963 residues: Ras-interacting protein 1 (963 aa).

Over residues 1–10 the composition is skewed to basic and acidic residues; it reads MLSGERKEGG. Disordered regions lie at residues 1–22 and 35–118; these read MLSG…LPVG and LGRR…AQRW. Over residues 41–57 the composition is skewed to low complexity; the sequence is SAASVKSSSSDTGSRSS. Residue Arg94 is modified to Omega-N-methylarginine. Gly residues predominate over residues 96-113; that stretch reads SGTGTTGSSGAGGPGTPG. The Ras-associating domain occupies 144–259; sequence PPGVLKIFGA…RRFELRGREE (116 aa). Phosphoserine is present on residues Ser188, Ser280, and Ser292. The tract at residues 267-356 is disordered; the sequence is AFGAADSEGT…LSMAPGAADA (90 aa). The segment covering 290 to 301 has biased composition (low complexity); the sequence is AASGGAALASPG. Residues 302-313 show a composition bias toward gly residues; that stretch reads PGTGSGAPAGSG. The span at 320–333 shows a compositional bias: low complexity; it reads NLSLRRSVSELSLQ. Phosphoserine occurs at positions 326, 328, 331, and 419. One can recognise a Dilute domain in the interval 600-897; sequence GRLARLIKEA…PPAEREAVDT (298 aa).

As to quaternary structure, interacts with Ras family members that have been activated by GTP binding. Interacts with HRAS, RAP1A, RAP2, RRAS, RAF1 and RRAS2. Interacts with MYH9 and ARHGAP29. As to expression, highly expressed in heart. Detected at lower levels in placenta and pancreas.

It localises to the cytoplasm. The protein localises to the perinuclear region. It is found in the golgi apparatus. The protein resides in the golgi stack. Required for the proper formation of vascular structures that develop via both vasculogenesis and angiogenesis. Acts as a critical and vascular-specific regulator of GTPase signaling, cell architecture, and adhesion, which is essential for endothelial cell morphogenesis and blood vessel tubulogenesis. Regulates the activity of Rho GTPases in part by recruiting ARHGAP29 and suppressing RhoA signaling and dampening ROCK and MYH9 activities in endothelial cells. May act as effector for Golgi-bound HRAS and other Ras-like proteins. May promote HRAS-mediated transformation. Negative regulator of amino acid starvation-induced autophagy. This is Ras-interacting protein 1 (RASIP1) from Homo sapiens (Human).